The chain runs to 457 residues: Multidrug resistance protein MdtK (457 aa).

12 consecutive transmembrane segments (helical) span residues 11-31, 53-73, 93-113, 127-147, 160-180, 189-209, 243-263, 276-296, 314-334, 350-370, 387-407, and 418-438; these read LLAL…MGFV, IWLP…PVIA, WLAG…GYII, AVGY…FQVA, GMVM…IFIY, GGVG…LAMV, LPIA…ALLV, IALN…AAVT, AART…IFTV, VVTL…SDSI, IFYI…YILA, and PAGF…MMML.

Belongs to the multi antimicrobial extrusion (MATE) (TC 2.A.66.1) family. MdtK subfamily.

The protein resides in the cell inner membrane. Its function is as follows. Multidrug efflux pump that functions probably as a Na(+)/drug antiporter. This is Multidrug resistance protein MdtK from Escherichia coli O127:H6 (strain E2348/69 / EPEC).